Consider the following 166-residue polypeptide: Endoribonuclease YbeY (166 aa).

Residues His132, His136, and His142 each coordinate Zn(2+).

Belongs to the endoribonuclease YbeY family. Zn(2+) serves as cofactor.

It localises to the cytoplasm. Single strand-specific metallo-endoribonuclease involved in late-stage 70S ribosome quality control and in maturation of the 3' terminus of the 16S rRNA. This Clostridium botulinum (strain Loch Maree / Type A3) protein is Endoribonuclease YbeY.